A 499-amino-acid chain; its full sequence is Potassium voltage-gated channel subfamily A member 2 (499 aa).

The disordered stretch occupies residues 1-26; the sequence is MTVATGDPADEAAALPGHPQDTYDPE. The tetramerization domain stretch occupies residues 1 to 125; the sequence is MTVATGDPAD…YELGEEAMEM (125 aa). Residues 1–160 are Cytoplasmic-facing; the sequence is MTVATGDPAD…LLFEYPESSG (160 aa). The helical transmembrane segment at 161 to 182 threads the bilayer; sequence PARIIAIVSVMVILISIVSFCL. Over 183–221 the chain is Extracellular; sequence ETLPIFRDENEDMHGSGVTFHTYSNSTIGYQQSTSFTDP. N207 carries an N-linked (GlcNAc...) asparagine glycan. The helical transmembrane segment at 222–243 threads the bilayer; sequence FFIVETLCIIWFSFEFLVRFFA. A lipid anchor (S-palmitoyl cysteine) is attached at C244. Residues 244–254 are Cytoplasmic-facing; that stretch reads CPSKAGFFTNI. The helical transmembrane segment at 255-275 threads the bilayer; that stretch reads MNIIDIVAIIPYFITLGTELA. The Extracellular portion of the chain corresponds to 276-289; that stretch reads EKPEDAQQGQQAMS. Residues 290-310 form a helical; Voltage-sensor membrane-spanning segment; it reads LAILRVIRLVRVFRIFKLSRH. At 311–325 the chain is on the cytoplasmic side; that stretch reads SKGLQILGQTLKASM. Residues 312–325 form an S4-S5 linker region; that stretch reads KGLQILGQTLKASM. A helical transmembrane segment spans residues 326-347; sequence RELGLLIFFLFIGVILFSSAVY. Residues 348–361 lie on the Extracellular side of the membrane; sequence FAEADERESQFPSI. Residues 362 to 373 constitute an intramembrane region (helical); the sequence is PDAFWWAVVSMT. Positions 374 to 379 match the Selectivity filter motif; that stretch reads TVGYGD. An intramembrane segment occupies 374 to 381; that stretch reads TVGYGDMV. Residues 382–388 are Extracellular-facing; sequence PTTIGGK. Residues 389-417 form a helical membrane-spanning segment; that stretch reads IVGSLCAIAGVLTIALPVPVIVSNFNYFY. Over 418-499 the chain is Cytoplasmic; that stretch reads HRETEGEEQA…VNITKMLTDV (82 aa). The residue at position 429 (Y429) is a Phosphotyrosine. Phosphoserine is present on residues S434, S440, S441, and S449. Y458 bears the Phosphotyrosine mark. At S468 the chain carries Phosphoserine. Positions 497-499 match the PDZ-binding motif; that stretch reads TDV.

It belongs to the potassium channel family. A (Shaker) (TC 1.A.1.2) subfamily. Kv1.2/KCNA2 sub-subfamily. In terms of assembly, homotetramer and heterotetramer with other channel-forming alpha subunits, such as KCNA1, KCNA4, KCNA5, KCNA6 and KCNA7. Channel activity is regulated by interaction with the beta subunits, including KCNAB1 and KCNAB2. Identified in a complex with KCNA1 and KCNAB2. Identified in a complex with KCNA5 and KCNAB1. Identified in a complex with KCNA4 and FYN. Interacts with the beta subunit KCNAB1. Interacts with PTK2B. Interacts (via C-terminus) with CTTN. Interacts (via N-terminal cytoplasmic domain) with RHOA (GTP-bound form); this regulates channel activity by reducing location at the cell surface in response to CHRM1 activation. Interacts with DRD2. Interacts with SIGMAR1; cocaine consumption leads to increased interaction. Interacts with ADAM22. Interacts (via C-terminus) with the PDZ domains of DLG1, DLG2 and DLG4. Interacts with CNTNAP2. Interacts with ADAM11. Interacts with LYNX1. Phosphorylated on tyrosine residues; phosphorylation increases in response to ischemia. Phosphorylated on tyrosine residues by activated PTK2B/PYK2. Phosphorylation on tyrosine residues suppresses ion channel activity. Phosphorylated on tyrosine residues in response to CHRM1 activation; this abolishes interaction with CTTN. This is probably due to endocytosis of the phosphorylated channel subunits. Phosphorylated on serine residues in response to increased cAMP levels; phosphorylation is apparently not catalyzed by PKA. In terms of processing, N-glycosylated, with complex, sialylated N-glycans. As to expression, detected in brain cortex. Detected in peroneal nerve in the juxtaparanodal regions of the node of Ranvier; expression is decreased in patients with diabetes mellitus that suffer from axonal neuropathy. Detected in paranodal and juxtanodal zones in myelinated spinal cord (at protein level).

The protein localises to the cell membrane. It localises to the membrane. Its subcellular location is the cell projection. It is found in the axon. The protein resides in the synapse. The protein localises to the endoplasmic reticulum membrane. It localises to the lamellipodium membrane. Its subcellular location is the synaptosome. It is found in the presynaptic cell membrane. The protein resides in the dendrite. The protein localises to the cell junction. It localises to the paranodal septate junction. It carries out the reaction K(+)(in) = K(+)(out). With respect to regulation, inhibited by 4-aminopyridine (4-AP) and charybdotoxin (CTX), but not by tetraethylammonium (TEA). Inhibited by dendrotoxin (DTX). Inhibited by tityustoxin-K alpha (TsTX-Kalpha), a toxin that is highly specific for KCNA2. Inhibited by maurotoxin. Inhibited by kappaM conotoxins kappaM-RIIIJ and kappaM-RIIIK; kappaM-RIIIJ has much higher affinity for channels containing KCNA2 than kappaM-RIIIK, with the exception of heterodimers formed by KCNA2 and KCNA7 where the opposite is true. In terms of biological role, voltage-gated potassium channel that mediates transmembrane potassium transport in excitable membranes, primarily in the brain and the central nervous system, but also in the cardiovascular system. Prevents aberrant action potential firing and regulates neuronal output. Forms tetrameric potassium-selective channels through which potassium ions pass in accordance with their electrochemical gradient. The channel alternates between opened and closed conformations in response to the voltage difference across the membrane. Can form functional homotetrameric channels and heterotetrameric channels that contain variable proportions of KCNA1, KCNA2, KCNA4, KCNA5, KCNA6, KCNA7, and possibly other family members as well; channel properties depend on the type of alpha subunits that are part of the channel. Channel properties are modulated by cytoplasmic beta subunits that regulate the subcellular location of the alpha subunits and promote rapid inactivation of delayed rectifier potassium channels. In vivo, membranes probably contain a mixture of heteromeric potassium channel complexes, making it difficult to assign currents observed in intact tissues to any particular potassium channel family member. Homotetrameric KCNA2 forms a delayed-rectifier potassium channel that opens in response to membrane depolarization, followed by slow spontaneous channel closure. In contrast, a heteromultimer formed by KCNA2 and KCNA4 shows rapid inactivation. Regulates neuronal excitability and plays a role as pacemaker in the regulation of neuronal action potentials. KCNA2-containing channels play a presynaptic role and prevent hyperexcitability and aberrant action potential firing. Response to toxins that are selective for KCNA2-containing potassium channels suggests that in Purkinje cells, dendritic subthreshold KCNA2-containing potassium channels prevent random spontaneous calcium spikes, suppressing dendritic hyperexcitability without hindering the generation of somatic action potentials, and thereby play an important role in motor coordination. Plays a role in the induction of long-term potentiation of neuron excitability in the CA3 layer of the hippocampus. May function as down-stream effector for G protein-coupled receptors and inhibit GABAergic inputs to basolateral amygdala neurons. May contribute to the regulation of neurotransmitter release, such as gamma-aminobutyric acid (GABA). Contributes to the regulation of the axonal release of the neurotransmitter dopamine. Reduced KCNA2 expression plays a role in the perception of neuropathic pain after peripheral nerve injury, but not acute pain. Plays a role in the regulation of the time spent in non-rapid eye movement (NREM) sleep. The polypeptide is Potassium voltage-gated channel subfamily A member 2 (KCNA2) (Homo sapiens (Human)).